Here is a 144-residue protein sequence, read N- to C-terminus: Tail fiber protein R (144 aa).

Structural or assembly protein of tail fibers. This is Tail fiber protein R (R) from Enterobacteriaceae (Bacteriophage P1).